The sequence spans 185 residues: Anaphase-promoting complex subunit 10 (185 aa).

Threonine 2 carries the post-translational modification N-acetylthreonine. A DOC domain is found at 2–185 (TTPNKTPPGA…IDFMMYRSIR (184 aa)). Lysine 169 carries the N6-acetyllysine modification.

This sequence belongs to the APC10 family. As to quaternary structure, the mammalian APC/C is composed at least of 14 distinct subunits ANAPC1, ANAPC2, CDC27/APC3, ANAPC4, ANAPC5, CDC16/APC6, ANAPC7, CDC23/APC8, ANAPC10, ANAPC11, CDC26/APC12, ANAPC13, ANAPC15 and ANAPC16 that assemble into a complex of at least 19 chains with a combined molecular mass of around 1.2 MDa; APC/C interacts with FZR1 and FBXO5. The C-terminus of APC10 binds to CDC27/APC3. Interacts with PIWIL1; interaction only takes place when PIWIL1 binds piRNA. Interacts with FBXO43; the interaction is direct.

It participates in protein modification; protein ubiquitination. In terms of biological role, component of the anaphase promoting complex/cyclosome (APC/C), a cell cycle-regulated E3 ubiquitin ligase that controls progression through mitosis and the G1 phase of the cell cycle. The APC/C complex acts by mediating ubiquitination and subsequent degradation of target proteins: it mainly mediates the formation of 'Lys-11'-linked polyubiquitin chains and, to a lower extent, the formation of 'Lys-48'- and 'Lys-63'-linked polyubiquitin chains. The APC/C complex catalyzes assembly of branched 'Lys-11'-/'Lys-48'-linked branched ubiquitin chains on target proteins. This Bos taurus (Bovine) protein is Anaphase-promoting complex subunit 10 (ANAPC10).